The chain runs to 927 residues: Transmembrane protein 132 homolog (927 aa).

An N-terminal signal peptide occupies residues 1–18; that stretch reads MLKKLWICISCIVTTALS. A helical transmembrane segment spans residues 749–769; the sequence is FHIFVLTIIGLIILFLFISFV. The disordered stretch occupies residues 789–842; the sequence is LSSSSGSNSRQEETNEWVWLSQPQPPSSTISSGYSGNKSTAERQSSNGDDPSRT. The span at 817–842 shows a compositional bias: polar residues; it reads TISSGYSGNKSTAERQSSNGDDPSRT.

This sequence belongs to the TMEM132 family. In terms of assembly, interacts with gex-3. In terms of tissue distribution, specifically expressed in neurons.

It is found in the membrane. Its function is as follows. Regulates neuronal morphology via inhibition of the WAVE regulatory complex (WCR), a complex that controls F-actin cytoskeletal dynamics. The sequence is that of Transmembrane protein 132 homolog from Caenorhabditis elegans.